We begin with the raw amino-acid sequence, 247 residues long: Aliphatic sulfonates import ATP-binding protein SsuB 1 (247 aa).

An ABC transporter domain is found at 7-222 (LSLSGVHKSF…KRSSYEFVET (216 aa)). 39 to 46 (GKSGCGKS) provides a ligand contact to ATP.

This sequence belongs to the ABC transporter superfamily. Aliphatic sulfonates importer (TC 3.A.1.17.2) family. As to quaternary structure, the complex is composed of two ATP-binding proteins (SsuB), two transmembrane proteins (SsuC) and a solute-binding protein (SsuA).

It is found in the cell membrane. It catalyses the reaction ATP + H2O + aliphatic sulfonate-[sulfonate-binding protein]Side 1 = ADP + phosphate + aliphatic sulfonateSide 2 + [sulfonate-binding protein]Side 1.. In terms of biological role, part of the ABC transporter complex SsuABC involved in aliphatic sulfonates import. Responsible for energy coupling to the transport system. This Shouchella clausii (strain KSM-K16) (Alkalihalobacillus clausii) protein is Aliphatic sulfonates import ATP-binding protein SsuB 1.